The chain runs to 906 residues: MESRIWCLVVCVNLCIVCLGAAVSSSSTSHATSSTHNGSHTSRTTSAQTRSVYSQHVTSSEAVSHRANETIYNTTLKYGDVVGVNTTKYPYRVCSMAQGTDLIRFERNIICTSMKPINEDLDEGIMVVYKRNIVAHTFKVRVYQKVLTFRRSYAYIYTTYLLGSNTEYVAPPMWEIHHINKFAQCYSSYSRVIGGTVFVAYHRDSYENKTMQLIPDDYSNTHSTRYVTVKDQWHSRGSTWLYRETCNLNCMLTITTARSKYPYHFFATSTGDVVYISPFYNGTNRNASYFGENADKFFIFPNYTIVSDFGRPNAAPETHRLVAFLERADSVISWDIQDEKNVTCQLTFWEASERTIRSEAEDSYHFSSAKMTATFLSKKQEVNMSDSALDCVRDEAINKLQQIFNTSYNQTYEKYGNVSVFETSGGLVVFWQGIKQKSLVELERLANRSSLNITHRTRRSTSDNNTTHLSSMESVHNLVYAQLQFTYDTLRGYINRALAQIAEAWCVDQRRTLEVFKELSKINPSAILSAIYNKPIAARFMGDVLGLASCVTINQTSVKVLRDMNVKESPGRCYSRPVVIFNFANSSYVQYGQLGEDNEILLGNHRTEECQLPSLKIFIAGNSAYEYVDYLFKRMIDLSSISTVDSMIALDIDPLENTDFRVLELYSQKELRSSNVFDLEEIMREFNSYKQRVKYVEDKVVDPLPPYLKGLDDLMSGLGAAGKAVGVAIGAVGGAVASVVEGVATFLKNPFGAFTIILVAIAVVIITYLIYTRQRRLCTQPLQNLFPYLVSADGTTVTSGSTKDTSLQAPPSYEESVYNSGRKGPGPPSSDASTAAPPYTNEQAYQMLLALARLDAEQRAQQNGTDSLDGQTGTQDKGQKPNLLDRLRHRKNGYRHLKDSDEEENV.

An N-terminal signal peptide occupies residues 1–31 (MESRIWCLVVCVNLCIVCLGAAVSSSSTSHA). Positions 29–46 (SHATSSTHNGSHTSRTTS) are enriched in low complexity. Positions 29-51 (SHATSSTHNGSHTSRTTSAQTRS) are disordered. Residues 32–750 (TSSTHNGSHT…EGVATFLKNP (719 aa)) are Virion surface-facing. 4 N-linked (GlcNAc...) asparagine; by host glycosylation sites follow: Asn37, Asn68, Asn73, and Asn85. Intrachain disulfides connect Cys94–Cys550, Cys111–Cys506, Cys185–Cys250, Cys246–Cys250, and Cys344–Cys391. Positions 152–158 (SYAYIYT) are involved in fusion and/or binding to host membrane. A glycan (N-linked (GlcNAc...) asparagine; by host) is linked at Asn208. The interval 237-244 (GSTWLYRE) is involved in fusion and/or binding to host membrane. N-linked (GlcNAc...) asparagine; by host glycans are attached at residues Asn281, Asn286, Asn302, Asn341, Asn383, Asn405, Asn409, Asn417, Asn447, Asn452, Asn464, Asn465, Asn554, and Asn585. Cys573 and Cys610 are oxidised to a cystine. Hydrophobic membrane proximal region regions lie at residues 696 to 748 (VEDK…TFLK) and 727 to 747 (VAIG…ATFL). The chain crosses the membrane as a helical span at residues 751 to 771 (FGAFTIILVAIAVVIITYLIY). At 772 to 906 (TRQRRLCTQP…LKDSDEEENV (135 aa)) the chain is on the intravirion side. Composition is skewed to polar residues over residues 797–809 (VTSG…SLQA) and 859–876 (RAQQ…GTQD). Disordered regions lie at residues 797–837 (VTSG…TAAP) and 856–906 (AEQR…EENV). A compositionally biased stretch (basic and acidic residues) spans 877 to 886 (KGQKPNLLDR). Positions 894–897 (YRHL) match the Internalization motif motif.

The protein belongs to the herpesviridae glycoprotein B family. In terms of assembly, homotrimer; disulfide-linked. Binds to heparan sulfate proteoglycans. Interacts with gH/gL heterodimer. Interacts with host TLR1 and TLR2. Interacts with host C-type lectin CD209/DC-SIGN. Interacts with host ITGB1, EGFR, and PDGFRA. Post-translationally, a proteolytic cleavage by host furin generates two subunits that remain linked by disulfide bonds.

It is found in the virion membrane. It localises to the host cell membrane. Its subcellular location is the host endosome membrane. The protein localises to the host Golgi apparatus membrane. In terms of biological role, envelope glycoprotein that plays a role in host cell entry, cell to-cell virus transmission, and fusion of infected cells. May be involved in the initial attachment via binding to heparan sulfate together with the gM/gN complex that binds heparin with higher affinity. Interacts with host integrin ITGB1, PDGFRA and EGFR that likely serve as postattachment entry receptors. Also participates in the fusion of viral and cellular membranes leading to virus entry into the host cell. Membrane fusion is mediated by the fusion machinery composed at least of gB and the heterodimer gH/gL. The sequence is that of Envelope glycoprotein B from Human cytomegalovirus (strain AD169) (HHV-5).